Consider the following 395-residue polypeptide: Neuromedin-U receptor 2 (395 aa).

At 1 to 41 the chain is on the extracellular side; the sequence is MGKLENASWIHDSLMKYLNSTEEYLAYLCGPKRSDLSLPVS. 2 N-linked (GlcNAc...) asparagine glycosylation sites follow: asparagine 6 and asparagine 19. A helical transmembrane segment spans residues 42-62; the sequence is VVYALIFVVGVIGNLLVCLVI. The Cytoplasmic segment spans residues 63 to 74; sequence ARHQTLKTPTNY. The chain crosses the membrane as a helical span at residues 75–95; that stretch reads YLFSLAVSDLLVLLLGMPLEV. Over 96-115 the chain is Extracellular; sequence YELWHNYPFLFGPVGCYFKT. A disulfide bridge links cysteine 111 with cysteine 196. A helical transmembrane segment spans residues 116–138; sequence ALFETVCFASILSVTTVSIERYV. Residues 139–157 are Cytoplasmic-facing; that stretch reads AIVHPFRAKLESTRRRALR. Residues 158-178 traverse the membrane as a helical segment; sequence ILSLVWSFSVVFSLPNTSIHG. The Extracellular portion of the chain corresponds to 179 to 212; sequence IKFQQFPNGSSVPGSATCTVTKPIWVYNFIIQAT. Residue asparagine 186 is glycosylated (N-linked (GlcNAc...) asparagine). The helical transmembrane segment at 213-233 threads the bilayer; sequence SFLFYILPMTLISVLYYLMGL. Topologically, residues 234–257 are cytoplasmic; it reads RLKRDESLEADKVTVNIHRPSRKS. Residues 258-278 form a helical membrane-spanning segment; it reads VTKMLFVLVLVFAICWTPFHV. Residues 279 to 293 lie on the Extracellular side of the membrane; that stretch reads DRLFFSFVDEWTESL. Residues 294-314 form a helical membrane-spanning segment; the sequence is AAVFNLIHVVSGVFFYLSSAV. Over 315–395 the chain is Cytoplasmic; the sequence is NPIIYNLLSR…TTVPCVEEVP (81 aa).

This sequence belongs to the G-protein coupled receptor 1 family. Expressed primarily in brain tissues, more specifically in medulla and spinal cord. Widespread distribution in peripheral tissues.

Its subcellular location is the cell membrane. In terms of biological role, receptor for the neuromedin-U and neuromedin-S neuropeptides. This chain is Neuromedin-U receptor 2 (Nmur2), found in Mus musculus (Mouse).